The primary structure comprises 686 residues: U-box domain-containing protein 19 (686 aa).

The region spanning 277 to 351 is the U-box domain; it reads LNVDDLRCPI…QSYSKQNGVV (75 aa). ARM repeat units lie at residues 406-445, 448-489, 491-533, 536-577, and 579-620; these read TFYR…NLSK, AGKT…YLSS, GDYS…SLLM, PDNH…KMAE, and PDGM…NLCH.

It carries out the reaction S-ubiquitinyl-[E2 ubiquitin-conjugating enzyme]-L-cysteine + [acceptor protein]-L-lysine = [E2 ubiquitin-conjugating enzyme]-L-cysteine + N(6)-ubiquitinyl-[acceptor protein]-L-lysine.. Its pathway is protein modification; protein ubiquitination. In terms of biological role, functions as an E3 ubiquitin ligase. The polypeptide is U-box domain-containing protein 19 (PUB19) (Arabidopsis thaliana (Mouse-ear cress)).